Here is a 1188-residue protein sequence, read N- to C-terminus: F-box only protein 38 (1188 aa).

Residues 30-75 (MNQLSHEVLCHIFRYLPLQDIMCMECLSRKLKEAVTLYLRVVRVVD) enclose the F-box domain. Positions 59 to 119 (KLKEAVTLYL…LHPRYLERRR (61 aa)) are interaction with KLF7. 3 short sequence motifs (nuclear export signal) span residues 194–201 (LHLVGVNV), 307–316 (LEVDLGYLII), and 451–460 (LLPSLEFISL). A disordered region spans residues 487–526 (ALVSNQNSNNDDNNAQNNNANIHDNNHHHPDDSDEENDFR). A compositionally biased stretch (low complexity) spans 491 to 509 (NQNSNNDDNNAQNNNANIH). The residue at position 591 (Thr591) is a Phosphothreonine. A phosphoserine mark is found at Ser598, Ser600, and Ser606. Disordered stretches follow at residues 620–666 (RRYS…FPLE), 685–766 (MKAA…MEEG), and 787–909 (RTSR…STSD). Basic and acidic residues-rich tracts occupy residues 621 to 630 (RYSEREEKTG) and 685 to 699 (MKAARDIPEKKKNKD). Over residues 703 to 740 (SCSSTTASTVGNSSSHNTASQSPDFVRTVNSGGSSEPS) the composition is skewed to polar residues. Residues Ser736 and Ser740 each carry the phosphoserine modification. The segment covering 787–798 (RTSRCSDEERPS) has biased composition (basic and acidic residues). The segment covering 849–861 (SSQPESCDVQSNE) has biased composition (polar residues). Over residues 889–900 (TKPRHAMKRKRT) the composition is skewed to basic residues. The Nuclear localization signal motif lies at 896–899 (KRKR).

Part of the SCF (SKP1-CUL1-F-box) E3 ubiquitin-protein ligase complex SCF(FBXO38) composed of CUL1, SKP1, RBX1 and FBXO38. Interacts with KLF7. Interacts with PDCD1/PD-1.

It is found in the cytoplasm. Its subcellular location is the cytosol. The protein localises to the nucleus. It participates in protein modification; protein ubiquitination. In terms of biological role, substrate recognition component of a SCF (SKP1-CUL1-F-box protein) E3 ubiquitin-protein ligase complex which mediates the ubiquitination and subsequent proteasomal degradation of PDCD1/PD-1, thereby regulating T-cells-mediated immunity. Required for anti-tumor activity of T-cells by promoting the degradation of PDCD1/PD-1; the PDCD1-mediated inhibitory pathway being exploited by tumors to attenuate anti-tumor immunity and facilitate tumor survival. May indirectly stimulate the activity of transcription factor KLF7, a regulator of neuronal differentiation, without promoting KLF7 ubiquitination. In Homo sapiens (Human), this protein is F-box only protein 38.